A 631-amino-acid chain; its full sequence is MSATKLTRREQRARAQHFIDTLEGTAFPNSKRIYITGTHPGVRVPMREIQLSPTLIGGSKEQPQYEENEAIPVYDTSGPYGDPQIAINVQQGLAKLRQPWIDARADTEELTVRSSDYTRTRLADDGLDELRFSGLLTPKRAKTGRRVTQLHYARQGIITPEMEFIAIRENMGRERIRSEVLRHQHPGMSFGAHLPENITAEFVRDEVAAGRAIIPANINHPESEPMIIGRNFLVKVNANIGNSAVTSSIEEEVEKLVWSTRWGADTVMDLSTGRYIHETREWILRNSPVPIGTVPIYQALEKVNGIAEDLTWEAFRDTLLEQAEQGVDYFTIHAGVLLRYVPMTAKRLTGIVSRGGSIMAKWCLSHHQENFLYQHFREICEICAAYDVSLSLGDGLRPGSIQDANDEAQFAELHTLGELTKIAWEYDVQVMIEGPGHVPMQMIRRNMTEELEHCHEAPFYTLGPLTTDIAPGYDHFTSGIGAAMIGWFGCAMLCYVTPKEHLGLPNKEDVKQGLITYKIAAHAADLAKGHPGAQIRDNAMSKARFEFRWEDQFNLALDPFTARAYHDETLPQESGKVAHFCSMCGPKFCSMKISQEVRDYAAAQTIEVGMADMSENFRARGGEIYLHKEEA.

Substrate is bound by residues Asn-239, Met-268, Tyr-297, His-333, 353–355, 394–397, and Glu-433; these read SRG and DGLR. Position 437 (His-437) interacts with Zn(2+). Tyr-460 is a binding site for substrate. His-501 provides a ligand contact to Zn(2+). The [4Fe-4S] cluster site is built by Cys-581, Cys-584, and Cys-589.

The protein belongs to the ThiC family. Homodimer. [4Fe-4S] cluster serves as cofactor.

It catalyses the reaction 5-amino-1-(5-phospho-beta-D-ribosyl)imidazole + S-adenosyl-L-methionine = 4-amino-2-methyl-5-(phosphooxymethyl)pyrimidine + CO + 5'-deoxyadenosine + formate + L-methionine + 3 H(+). The protein operates within cofactor biosynthesis; thiamine diphosphate biosynthesis. Catalyzes the synthesis of the hydroxymethylpyrimidine phosphate (HMP-P) moiety of thiamine from aminoimidazole ribotide (AIR) in a radical S-adenosyl-L-methionine (SAM)-dependent reaction. The protein is Phosphomethylpyrimidine synthase of Shigella flexneri serotype 5b (strain 8401).